A 390-amino-acid chain; its full sequence is Guanine nucleotide-binding protein alpha-7 subunit (390 aa).

Composition is skewed to low complexity over residues 1–12 (MSSTTTNTTTAT) and 22–42 (SSSPQSPSSSTSTLSPPMSPS). A disordered region spans residues 1–42 (MSSTTTNTTTATPAIQVNGNQSSSPQSPSSSTSTLSPPMSPS). The G-alpha domain occupies 70–390 (SELKLLLLGT…TRQTMEEGGI (321 aa)). Residues 73 to 86 (KLLLLGTGDSGKST) are G1 motif. Residues 78-85 (GTGDSGKS), 213-219 (LYTRVAS), 238-242 (DVAGQ), 307-310 (NKRD), and alanine 363 each bind GTP. A Mg(2+)-binding site is contributed by serine 85. The segment at 211–219 (DILYTRVAS) is G2 motif. The interval 234–243 (FRMIDVAGQR) is G3 motif. Positions 303–310 (ILFLNKRD) are G4 motif. The interval 361–366 (TTATDT) is G5 motif.

The protein belongs to the G-alpha family. G proteins are composed of 3 units; alpha, beta and gamma. The alpha chain contains the guanine nucleotide binding site.

Guanine nucleotide-binding proteins (G proteins) are involved as modulators or transducers in various transmembrane signaling systems. This chain is Guanine nucleotide-binding protein alpha-7 subunit (gpaG), found in Dictyostelium discoideum (Social amoeba).